Reading from the N-terminus, the 285-residue chain is Pantothenate synthetase (285 aa).

ATP is bound at residue 30 to 37; that stretch reads MGNLHDGH. Catalysis depends on H37, which acts as the Proton donor. Q61 contacts (R)-pantoate. Q61 lines the beta-alanine pocket. Residue 149 to 152 coordinates ATP; that stretch reads GEKD. Q155 lines the (R)-pantoate pocket. ATP is bound by residues I178 and 186–189; that span reads LSSR.

This sequence belongs to the pantothenate synthetase family. As to quaternary structure, homodimer.

It localises to the cytoplasm. It catalyses the reaction (R)-pantoate + beta-alanine + ATP = (R)-pantothenate + AMP + diphosphate + H(+). Its pathway is cofactor biosynthesis; (R)-pantothenate biosynthesis; (R)-pantothenate from (R)-pantoate and beta-alanine: step 1/1. In terms of biological role, catalyzes the condensation of pantoate with beta-alanine in an ATP-dependent reaction via a pantoyl-adenylate intermediate. The polypeptide is Pantothenate synthetase (Buchnera aphidicola subsp. Acyrthosiphon pisum (strain 5A)).